The sequence spans 183 residues: UPF0398 protein LSL_0930 (183 aa).

This sequence belongs to the UPF0398 family.

The protein is UPF0398 protein LSL_0930 of Ligilactobacillus salivarius (strain UCC118) (Lactobacillus salivarius).